The primary structure comprises 350 residues: Xylene/toluene monooxygenase electron transfer component XylA (350 aa).

The 93-residue stretch at 16-108 (PESTVSVRGQ…DLEIELDTVL (93 aa)) folds into the 2Fe-2S ferredoxin-type domain. Positions 52, 57, 60, and 92 each coordinate [2Fe-2S] cluster. The segment at 109–350 (GQALVPIETS…ADRFYNRPPC (242 aa)) is ferredoxin--NADH reductase. An FAD-binding FR-type domain is found at 114–213 (PIETSALISK…RAPYGQFGLH (100 aa)).

It belongs to the bacterial ring-hydroxylating dioxygenase ferredoxin reductase family. Monomer. The xylene/toluene monooxygenase is composed of two subunits: the electron transfer component XylA and the hydroxylase component XylM. It depends on FAD as a cofactor. [2Fe-2S] cluster is required as a cofactor.

The protein localises to the cell inner membrane. It catalyses the reaction 2 reduced [2Fe-2S]-[ferredoxin] + NAD(+) + H(+) = 2 oxidized [2Fe-2S]-[ferredoxin] + NADH. The reductase activity is completely inhibited by quercetin (a common inhibitor of mammalian oxidoreductases) and p-chloromercuribenzoate, but not by iodoacetimide, N-ethylmaleimide and pyrrazole. Functionally, component of a monooxygenase that catalyzes the first step in the degradation of xylenes and toluenes. XylA is responsible for the transport of electrons from the electron donor NADH to the terminal hydroxylase component, XylM. This is Xylene/toluene monooxygenase electron transfer component XylA from Pseudomonas putida (Arthrobacter siderocapsulatus).